The chain runs to 76 residues: U10-ctenitoxin-Pn1a (76 aa).

An N-terminal signal peptide occupies residues 1–15; it reads SFVFYLFTLITVVRA. The propeptide occupies 16–36; the sequence is EEFILENEAEDIAPAVHGESG. Cystine bridges form between C39–C54, C46–C59, C53–C73, and C61–C71.

This sequence belongs to the neurotoxin 02 (plectoxin) family. 09 subfamily. Expressed by the venom gland.

The protein resides in the secreted. The protein is U10-ctenitoxin-Pn1a of Phoneutria nigriventer (Brazilian armed spider).